Consider the following 146-residue polypeptide: Anti-sigma F factor (146 aa).

It belongs to the anti-sigma-factor family.

The catalysed reaction is L-seryl-[protein] + ATP = O-phospho-L-seryl-[protein] + ADP + H(+). The enzyme catalyses L-threonyl-[protein] + ATP = O-phospho-L-threonyl-[protein] + ADP + H(+). Binds to sigma F and blocks its ability to form an RNA polymerase holoenzyme (E-sigma F). Phosphorylates SpoIIAA on a serine residue. This phosphorylation may enable SpoIIAA to act as an anti-anti-sigma factor that counteracts SpoIIAB and thus releases sigma F from inhibition. The polypeptide is Anti-sigma F factor (Bacillus anthracis (strain A0248)).